Consider the following 880-residue polypeptide: Alanine--tRNA ligase (880 aa).

Histidine 563, histidine 567, cysteine 673, and histidine 677 together coordinate Zn(2+).

Belongs to the class-II aminoacyl-tRNA synthetase family. Requires Zn(2+) as cofactor.

The protein resides in the cytoplasm. It catalyses the reaction tRNA(Ala) + L-alanine + ATP = L-alanyl-tRNA(Ala) + AMP + diphosphate. Functionally, catalyzes the attachment of alanine to tRNA(Ala) in a two-step reaction: alanine is first activated by ATP to form Ala-AMP and then transferred to the acceptor end of tRNA(Ala). Also edits incorrectly charged Ser-tRNA(Ala) and Gly-tRNA(Ala) via its editing domain. The protein is Alanine--tRNA ligase of Caulobacter vibrioides (strain ATCC 19089 / CIP 103742 / CB 15) (Caulobacter crescentus).